The following is a 618-amino-acid chain: DNA mismatch repair protein MutL (618 aa).

Residues 367 to 381 show a composition bias toward low complexity; it reads EPTAAREPATPRYSG. A disordered region spans residues 367–402; it reads EPTAAREPATPRYSGGASGGNGGRQSAGGWPHAQPG. Over residues 382 to 392 the composition is skewed to gly residues; that stretch reads GASGGNGGRQS.

Belongs to the DNA mismatch repair MutL/HexB family.

Functionally, this protein is involved in the repair of mismatches in DNA. It is required for dam-dependent methyl-directed DNA mismatch repair. May act as a 'molecular matchmaker', a protein that promotes the formation of a stable complex between two or more DNA-binding proteins in an ATP-dependent manner without itself being part of a final effector complex. The polypeptide is DNA mismatch repair protein MutL (Salmonella gallinarum (strain 287/91 / NCTC 13346)).